Here is a 374-residue protein sequence, read N- to C-terminus: Mannitol-1-phosphate 5-dehydrogenase (374 aa).

NAD(+) is bound at residue 3-14 (AIHFGAGNIGRG).

Belongs to the mannitol dehydrogenase family.

It carries out the reaction D-mannitol 1-phosphate + NAD(+) = beta-D-fructose 6-phosphate + NADH + H(+). The sequence is that of Mannitol-1-phosphate 5-dehydrogenase from Halalkalibacterium halodurans (strain ATCC BAA-125 / DSM 18197 / FERM 7344 / JCM 9153 / C-125) (Bacillus halodurans).